Reading from the N-terminus, the 346-residue chain is DNA polymerase IV 2 (346 aa).

In terms of domain architecture, UmuC spans 9 to 191 (ILHVDLDQFL…RTVEALWGVG (183 aa)). Residues Asp-13 and Asp-111 each coordinate Mg(2+). The active site involves Glu-112.

This sequence belongs to the DNA polymerase type-Y family. In terms of assembly, monomer. Mg(2+) serves as cofactor.

It is found in the cytoplasm. The enzyme catalyses DNA(n) + a 2'-deoxyribonucleoside 5'-triphosphate = DNA(n+1) + diphosphate. Functionally, poorly processive, error-prone DNA polymerase involved in untargeted mutagenesis. Copies undamaged DNA at stalled replication forks, which arise in vivo from mismatched or misaligned primer ends. These misaligned primers can be extended by PolIV. Exhibits no 3'-5' exonuclease (proofreading) activity. May be involved in translesional synthesis, in conjunction with the beta clamp from PolIII. This Mycobacterium bovis (strain ATCC BAA-935 / AF2122/97) protein is DNA polymerase IV 2 (dinB2).